The primary structure comprises 160 residues: 2-C-methyl-D-erythritol 2,4-cyclodiphosphate synthase (160 aa).

A divalent metal cation contacts are provided by Asp8 and His10. Residues Asp8–His10 and His34–Ser35 each bind 4-CDP-2-C-methyl-D-erythritol 2-phosphate. A divalent metal cation is bound at residue His42. Residues Asp56–Gly58, Phe61–Asp65, Ala100–Leu106, Thr132–Glu135, Phe139, and Arg142 contribute to the 4-CDP-2-C-methyl-D-erythritol 2-phosphate site.

Belongs to the IspF family. As to quaternary structure, homotrimer. It depends on a divalent metal cation as a cofactor.

It catalyses the reaction 4-CDP-2-C-methyl-D-erythritol 2-phosphate = 2-C-methyl-D-erythritol 2,4-cyclic diphosphate + CMP. It functions in the pathway isoprenoid biosynthesis; isopentenyl diphosphate biosynthesis via DXP pathway; isopentenyl diphosphate from 1-deoxy-D-xylulose 5-phosphate: step 4/6. Functionally, involved in the biosynthesis of isopentenyl diphosphate (IPP) and dimethylallyl diphosphate (DMAPP), two major building blocks of isoprenoid compounds. Catalyzes the conversion of 4-diphosphocytidyl-2-C-methyl-D-erythritol 2-phosphate (CDP-ME2P) to 2-C-methyl-D-erythritol 2,4-cyclodiphosphate (ME-CPP) with a corresponding release of cytidine 5-monophosphate (CMP). This Proteus mirabilis (strain HI4320) protein is 2-C-methyl-D-erythritol 2,4-cyclodiphosphate synthase.